The sequence spans 416 residues: PDZ and LIM domain protein 7 (416 aa).

The region spanning 1-85 (MESYKVMLNG…RLCLTLSRAQ (85 aa)) is the PDZ domain. Disordered stretches follow at residues 145-191 (CTPQ…AVDP) and 202-221 (TSTVLSKHSQPATPTPMQNR). Residues 168 to 181 (PGLAPRTPAATPGP) are compositionally biased toward low complexity. LIM zinc-binding domains are found at residues 239-297 (PLCY…TRYA), 298-357 (PSCA…MFGT), and 358-416 (KCRG…FSHV).

In terms of assembly, interacts with various PKC isoforms through the LIM zinc-binding domains. Interacts with TPM2. Interacts with TBX4 and TBX5.

Its subcellular location is the cytoplasm. It localises to the cytoskeleton. The protein resides in the myofibril. It is found in the sarcomere. The protein localises to the z line. Its function is as follows. May function as a scaffold on which the coordinated assembly of proteins can occur. May play a role as an adapter that, via its PDZ domain, localizes LIM-binding proteins to actin filaments of both skeletal muscle and nonmuscle tissues. May be involved in bone formation. The sequence is that of PDZ and LIM domain protein 7 (PDLIM7) from Gallus gallus (Chicken).